The sequence spans 694 residues: Probable metal-nicotianamine transporter YSL8 (694 aa).

The next 14 helical transmembrane spans lie at 38–58 (ITVR…FIVM), 62–82 (LTSG…FFLM), 110–130 (CVIS…ILGM), 154–174 (LGRL…SIVP), 215–235 (ILFK…FYAA), 265–285 (VGVG…GSVV), 319–339 (VFIS…SIVL), 393–413 (IAAA…PHIF), 421–441 (VVWA…GTGL), 467–487 (GGVV…STAS), 506–526 (MFVS…MVFW), 567–587 (LRFC…KEVA), 608–628 (FFLG…LFLW), and 643–663 (VASG…ILSL).

It belongs to the YSL (TC 2.A.67.2) family. As to expression, expressed in root epidermis and exoderm.

The protein localises to the membrane. May be involved in the transport of nicotianamine-chelated metals. The protein is Probable metal-nicotianamine transporter YSL8 (YSL8) of Oryza sativa subsp. japonica (Rice).